Reading from the N-terminus, the 146-residue chain is Small ribosomal subunit protein bS6 (146 aa).

The disordered stretch occupies residues 106 to 146; that stretch reads QAAATQRAAERRAQREAERNAAQAQSSASNQARTAATTSGK. The span at 113 to 124 shows a compositional bias: basic and acidic residues; that stretch reads AAERRAQREAER. Over residues 125 to 146 the composition is skewed to low complexity; sequence NAAQAQSSASNQARTAATTSGK.

The protein belongs to the bacterial ribosomal protein bS6 family.

Its function is as follows. Binds together with bS18 to 16S ribosomal RNA. In Oenococcus oeni (strain ATCC BAA-331 / PSU-1), this protein is Small ribosomal subunit protein bS6.